A 497-amino-acid polypeptide reads, in one-letter code: Carboxypeptidase Y homolog ARB_02032 (497 aa).

A signal peptide spans 1–18 (MRFTQIVAAALCLGATEA). Asn-88 carries an N-linked (GlcNAc...) asparagine glycan. Residue Ser-204 is part of the active site. N-linked (GlcNAc...) asparagine glycans are attached at residues Asn-263 and Asn-393. The active site involves Asp-403. The N-linked (GlcNAc...) asparagine glycan is linked to Asn-417. Residue His-469 is part of the active site.

Belongs to the peptidase S10 family.

It localises to the secreted. It catalyses the reaction Release of a C-terminal amino acid with broad specificity.. Involved in degradation of small peptides. This is Carboxypeptidase Y homolog ARB_02032 from Arthroderma benhamiae (strain ATCC MYA-4681 / CBS 112371) (Trichophyton mentagrophytes).